The following is a 305-amino-acid chain: tRNA dimethylallyltransferase (305 aa).

8–15 (GPTAIGKS) provides a ligand contact to ATP. Substrate is bound at residue 10 to 15 (TAIGKS). The interval 33–36 (DSMA) is interaction with substrate tRNA.

Belongs to the IPP transferase family. Monomer. Requires Mg(2+) as cofactor.

The enzyme catalyses adenosine(37) in tRNA + dimethylallyl diphosphate = N(6)-dimethylallyladenosine(37) in tRNA + diphosphate. Functionally, catalyzes the transfer of a dimethylallyl group onto the adenine at position 37 in tRNAs that read codons beginning with uridine, leading to the formation of N6-(dimethylallyl)adenosine (i(6)A). This chain is tRNA dimethylallyltransferase, found in Aquifex aeolicus (strain VF5).